The chain runs to 111 residues: Resistin-like beta (111 aa).

Residues 1-23 (MGPSSCLLLILIPLLQLINPGST) form the signal peptide. Intrachain disulfides connect Cys55-Cys108, Cys67-Cys107, Cys76-Cys93, Cys78-Cys95, and Cys82-Cys97.

This sequence belongs to the resistin/FIZZ family. In terms of assembly, homodimer; disulfide-linked. In terms of tissue distribution, expressed only in the gastrointestinal tract, particularly the colon.

The protein resides in the secreted. Probable hormone. The chain is Resistin-like beta (RETNLB) from Homo sapiens (Human).